Consider the following 214-residue polypeptide: Adenylate kinase (214 aa).

10-15 (GAGKGT) lines the ATP pocket. The NMP stretch occupies residues 30–59 (ATGDVLRAAVKEGTPLGLEAKAAMDRGDLV). Residues Thr-31, Arg-36, 57–59 (DLV), and Gln-92 contribute to the AMP site. An LID region spans residues 126-161 (GRTTCEACQRPFFGRQPGETCTEGGVSGTLVRRKDD). Residue Arg-127 coordinates ATP. Residues Arg-158 and Arg-169 each coordinate AMP. Position 198 (Gly-198) interacts with ATP.

The protein belongs to the adenylate kinase family. In terms of assembly, monomer.

The protein resides in the cytoplasm. The catalysed reaction is AMP + ATP = 2 ADP. The protein operates within purine metabolism; AMP biosynthesis via salvage pathway; AMP from ADP: step 1/1. In terms of biological role, catalyzes the reversible transfer of the terminal phosphate group between ATP and AMP. Plays an important role in cellular energy homeostasis and in adenine nucleotide metabolism. In Gemmatimonas aurantiaca (strain DSM 14586 / JCM 11422 / NBRC 100505 / T-27), this protein is Adenylate kinase.